Here is a 387-residue protein sequence, read N- to C-terminus: LL-diaminopimelate aminotransferase (387 aa).

2 residues coordinate substrate: Y14 and G39. Pyridoxal 5'-phosphate-binding positions include Y68, 102 to 103 (SK), Y127, N177, Y208, and 236 to 238 (SLS). Substrate-binding residues include K103, Y127, and N177. The residue at position 239 (K239) is an N6-(pyridoxal phosphate)lysine. R247 contacts pyridoxal 5'-phosphate. Position 365 (R365) interacts with substrate.

It belongs to the class-I pyridoxal-phosphate-dependent aminotransferase family. LL-diaminopimelate aminotransferase subfamily. As to quaternary structure, homodimer. It depends on pyridoxal 5'-phosphate as a cofactor.

It carries out the reaction (2S,6S)-2,6-diaminopimelate + 2-oxoglutarate = (S)-2,3,4,5-tetrahydrodipicolinate + L-glutamate + H2O + H(+). The protein operates within amino-acid biosynthesis; L-lysine biosynthesis via DAP pathway; LL-2,6-diaminopimelate from (S)-tetrahydrodipicolinate (aminotransferase route): step 1/1. Functionally, involved in the synthesis of meso-diaminopimelate (m-DAP or DL-DAP), required for both lysine and peptidoglycan biosynthesis. Catalyzes the direct conversion of tetrahydrodipicolinate to LL-diaminopimelate. This Aquifex aeolicus (strain VF5) protein is LL-diaminopimelate aminotransferase.